A 514-amino-acid chain; its full sequence is 2,3-bisphosphoglycerate-independent phosphoglycerate mutase (514 aa).

Mn(2+) is bound by residues Asp-13 and Ser-63. Ser-63 serves as the catalytic Phosphoserine intermediate. Substrate-binding positions include His-124, 154-155 (RD), Arg-186, Arg-192, 258-261 (RADR), and Lys-332. 5 residues coordinate Mn(2+): Asp-399, His-403, Asp-440, His-441, and His-459.

It belongs to the BPG-independent phosphoglycerate mutase family. As to quaternary structure, monomer. Mn(2+) serves as cofactor.

It carries out the reaction (2R)-2-phosphoglycerate = (2R)-3-phosphoglycerate. Its pathway is carbohydrate degradation; glycolysis; pyruvate from D-glyceraldehyde 3-phosphate: step 3/5. Functionally, catalyzes the interconversion of 2-phosphoglycerate and 3-phosphoglycerate. In Legionella pneumophila subsp. pneumophila (strain Philadelphia 1 / ATCC 33152 / DSM 7513), this protein is 2,3-bisphosphoglycerate-independent phosphoglycerate mutase.